The sequence spans 569 residues: Urease subunit alpha (569 aa).

The region spanning 131–569 (GGFDSHIHFI…LPMAQRYFLF (439 aa)) is the Urease domain. Ni(2+)-binding residues include His136, His138, and Lys219. Position 219 is an N6-carboxylysine (Lys219). His221 is a binding site for substrate. Residues His248 and His274 each coordinate Ni(2+). His322 acts as the Proton donor in catalysis. Asp362 lines the Ni(2+) pocket.

Belongs to the metallo-dependent hydrolases superfamily. Urease alpha subunit family. In terms of assembly, heterotrimer of UreA (gamma), UreB (beta) and UreC (alpha) subunits. Three heterotrimers associate to form the active enzyme. Ni cation is required as a cofactor. In terms of processing, carboxylation allows a single lysine to coordinate two nickel ions.

It localises to the cytoplasm. It catalyses the reaction urea + 2 H2O + H(+) = hydrogencarbonate + 2 NH4(+). The protein operates within nitrogen metabolism; urea degradation; CO(2) and NH(3) from urea (urease route): step 1/1. This Ruegeria pomeroyi (strain ATCC 700808 / DSM 15171 / DSS-3) (Silicibacter pomeroyi) protein is Urease subunit alpha.